A 198-amino-acid chain; its full sequence is 7-methyl-GTP pyrophosphatase (198 aa).

Asp-69 serves as the catalytic Proton acceptor.

It belongs to the Maf family. YceF subfamily. It depends on a divalent metal cation as a cofactor.

It localises to the cytoplasm. The enzyme catalyses N(7)-methyl-GTP + H2O = N(7)-methyl-GMP + diphosphate + H(+). Functionally, nucleoside triphosphate pyrophosphatase that hydrolyzes 7-methyl-GTP (m(7)GTP). May have a dual role in cell division arrest and in preventing the incorporation of modified nucleotides into cellular nucleic acids. The protein is 7-methyl-GTP pyrophosphatase of Yersinia pseudotuberculosis serotype I (strain IP32953).